The chain runs to 1106 residues: GYF domain-containing protein gyf-1 (1106 aa).

A compositionally biased stretch (polar residues) spans 1 to 17; the sequence is MSSVSSAEPTAQQNFNP. 3 disordered regions span residues 1–50, 160–370, and 383–434; these read MSSV…GGFD, GALQ…DSTV, and KAST…SAWS. The segment covering 30–42 has biased composition (low complexity); sequence RGGSISSGNNRSS. The span at 162–180 shows a compositional bias: polar residues; it reads LQNGQSPTSRWAPKSSWNK. Over residues 207–224 the composition is skewed to gly residues; that stretch reads GRGGGRIGGENGFGGATN. A compositionally biased stretch (polar residues) spans 229–243; sequence AAQNEDSPGTYQSKF. A compositionally biased stretch (gly residues) spans 248–261; the sequence is RGGGAGSVGRGGST. A compositionally biased stretch (polar residues) spans 306 to 322; that stretch reads VGSTSRTSTNAAPQSSE. Low complexity-rich tracts occupy residues 334–353 and 390–410; these read QRTQ…QQAQ and PPQQ…APSR. In terms of domain architecture, GYF spans 459-508; that stretch reads PVQFYYMDPTETRRGPFPKDQMNVWFKAGYFTDESLRVQRGENGEYKTIG. Residues 584-746 are a coiled coil; that stretch reads LDDHNRRLAE…ERKRAAERER (163 aa). Disordered stretches follow at residues 778 to 811, 909 to 928, 1026 to 1076, and 1087 to 1106; these read AFTG…KTAP, KNSQ…SAKV, AGGR…DGNI, and RLNK…PSRR. The span at 786–801 shows a compositional bias: polar residues; it reads VSPSGSEESDEWISTS. The segment covering 1046–1057 has biased composition (low complexity); sequence SDSNSGSNSNSG.

This chain is GYF domain-containing protein gyf-1, found in Caenorhabditis elegans.